Here is a 292-residue protein sequence, read N- to C-terminus: NAD kinase (292 aa).

The active-site Proton acceptor is aspartate 73. NAD(+) contacts are provided by residues 73–74 (DG), 147–148 (NE), histidine 158, arginine 175, aspartate 177, 188–193 (TAYSLS), and glutamine 247.

This sequence belongs to the NAD kinase family. Requires a divalent metal cation as cofactor.

It is found in the cytoplasm. It carries out the reaction NAD(+) + ATP = ADP + NADP(+) + H(+). Its function is as follows. Involved in the regulation of the intracellular balance of NAD and NADP, and is a key enzyme in the biosynthesis of NADP. Catalyzes specifically the phosphorylation on 2'-hydroxyl of the adenosine moiety of NAD to yield NADP. This chain is NAD kinase, found in Erwinia tasmaniensis (strain DSM 17950 / CFBP 7177 / CIP 109463 / NCPPB 4357 / Et1/99).